Here is a 637-residue protein sequence, read N- to C-terminus: 3D-(3,5/4)-trihydroxycyclohexane-1,2-dione hydrolase (637 aa).

E66 is a thiamine diphosphate binding site. Residues 442 to 522 (SLPGDLQRLW…INVLLFDNSG (81 aa)) form a thiamine pyrophosphate binding region. 2 residues coordinate Mg(2+): D493 and N520.

It belongs to the TPP enzyme family. Requires Mg(2+) as cofactor. Thiamine diphosphate is required as a cofactor.

It carries out the reaction 3D-3,5/4-trihydroxycyclohexane-1,2-dione + H2O = 5-deoxy-D-glucuronate + H(+). It participates in polyol metabolism; myo-inositol degradation into acetyl-CoA; acetyl-CoA from myo-inositol: step 3/7. Its function is as follows. Involved in the cleavage of the C1-C2 bond of 3D-(3,5/4)-trihydroxycyclohexane-1,2-dione (THcHDO) to yield 5-deoxy-glucuronate (5DG). The chain is 3D-(3,5/4)-trihydroxycyclohexane-1,2-dione hydrolase from Bacillus licheniformis (strain ATCC 14580 / DSM 13 / JCM 2505 / CCUG 7422 / NBRC 12200 / NCIMB 9375 / NCTC 10341 / NRRL NRS-1264 / Gibson 46).